Consider the following 194-residue polypeptide: Adapter protein MecA 2 (194 aa).

Belongs to the MecA family. As to quaternary structure, homodimer.

Functionally, enables the recognition and targeting of unfolded and aggregated proteins to the ClpC protease or to other proteins involved in proteolysis. Also involved in Spx degradation by ClpC. Acts negatively in the development of competence by binding ComK and recruiting it to the ClpCP protease. When overexpressed, inhibits sporulation. This is Adapter protein MecA 2 (mecB) from Bacillus subtilis (strain 168).